Consider the following 388-residue polypeptide: Isocitrate dehydrogenase [NAD] subunit 1, mitochondrial (388 aa).

Residues Met-1–Phe-35 constitute a mitochondrion transit peptide. 3 residues coordinate substrate: Arg-137, Arg-168, and Asp-255. Asp-255 is a binding site for Mg(2+).

This sequence belongs to the isocitrate and isopropylmalate dehydrogenases family. Octamer of two non-identical subunits IDH1 and IDH2. It depends on Mg(2+) as a cofactor. Requires Mn(2+) as cofactor.

The protein localises to the mitochondrion. The enzyme catalyses D-threo-isocitrate + NAD(+) = 2-oxoglutarate + CO2 + NADH. Functionally, performs an essential role in the oxidative function of the citric acid cycle. The sequence is that of Isocitrate dehydrogenase [NAD] subunit 1, mitochondrial (IDH1) from Ajellomyces capsulatus (Darling's disease fungus).